A 489-amino-acid polypeptide reads, in one-letter code: Cytochrome P450 71A26 (489 aa).

The chain crosses the membrane as a helical span at residues 1-21 (MMIMFFLLCSIIFVVTIIIFR). Position 431 (Cys431) interacts with heme.

Belongs to the cytochrome P450 family. Requires heme as cofactor.

It is found in the membrane. The protein is Cytochrome P450 71A26 (CYP71A26) of Arabidopsis thaliana (Mouse-ear cress).